The sequence spans 248 residues: Type III pantothenate kinase (248 aa).

An ATP-binding site is contributed by 6-13 (ELGNSQLK). Residues tyrosine 94 and 101–104 (GVDR) each bind substrate. Aspartate 103 (proton acceptor) is an active-site residue. Aspartate 123 serves as a coordination point for K(+). Position 126 (threonine 126) interacts with ATP. Substrate is bound at residue threonine 179.

Belongs to the type III pantothenate kinase family. In terms of assembly, homodimer. NH4(+) serves as cofactor. Requires K(+) as cofactor.

The protein localises to the cytoplasm. It carries out the reaction (R)-pantothenate + ATP = (R)-4'-phosphopantothenate + ADP + H(+). The protein operates within cofactor biosynthesis; coenzyme A biosynthesis; CoA from (R)-pantothenate: step 1/5. In terms of biological role, catalyzes the phosphorylation of pantothenate (Pan), the first step in CoA biosynthesis. The polypeptide is Type III pantothenate kinase (Hydrogenovibrio crunogenus (strain DSM 25203 / XCL-2) (Thiomicrospira crunogena)).